The sequence spans 245 residues: Ribonuclease 3 (245 aa).

An RNase III domain is found at 18 to 146; that stretch reads LSEFLENLSI…FVGAIYLDSG (129 aa). Mg(2+) is bound at residue Glu-59. Asp-63 is a catalytic residue. The Mg(2+) site is built by Asp-132 and Glu-135. Residue Glu-135 is part of the active site. In terms of domain architecture, DRBM spans 173 to 242; sequence DYKSLLQEYV…AEVALKAMED (70 aa).

The protein belongs to the ribonuclease III family. In terms of assembly, homodimer. The cofactor is Mg(2+).

The protein localises to the cytoplasm. It carries out the reaction Endonucleolytic cleavage to 5'-phosphomonoester.. Its function is as follows. Digests double-stranded RNA. Involved in the processing of primary rRNA transcript to yield the immediate precursors to the large and small rRNAs (23S and 16S). Processes some mRNAs, and tRNAs when they are encoded in the rRNA operon. Processes pre-crRNA and tracrRNA of type II CRISPR loci if present in the organism. The polypeptide is Ribonuclease 3 (Borreliella afzelii (strain PKo) (Borrelia afzelii)).